Consider the following 247-residue polypeptide: 2,3-bisphosphoglycerate-dependent phosphoglycerate mutase (247 aa).

Residues 9–16 (RHGESEWN), 22–23 (TG), arginine 61, 88–91 (ERHY), lysine 99, 115–116 (RR), and 183–184 (GN) each bind substrate. The active-site Tele-phosphohistidine intermediate is the histidine 10. Glutamate 88 (proton donor/acceptor) is an active-site residue.

Belongs to the phosphoglycerate mutase family. BPG-dependent PGAM subfamily.

The catalysed reaction is (2R)-2-phosphoglycerate = (2R)-3-phosphoglycerate. The protein operates within carbohydrate degradation; glycolysis; pyruvate from D-glyceraldehyde 3-phosphate: step 3/5. Its function is as follows. Catalyzes the interconversion of 2-phosphoglycerate and 3-phosphoglycerate. The sequence is that of 2,3-bisphosphoglycerate-dependent phosphoglycerate mutase from Nocardioides sp. (strain ATCC BAA-499 / JS614).